A 325-amino-acid chain; its full sequence is Beta-ketoacyl-[acyl-carrier-protein] synthase III 2 (325 aa).

Active-site residues include cysteine 113 and histidine 250. Residues 251-255 form an ACP-binding region; the sequence is SANLR. The active site involves asparagine 280.

The protein belongs to the thiolase-like superfamily. FabH family. Homodimer.

The protein localises to the cytoplasm. The catalysed reaction is 3-methylbutanoyl-CoA + malonyl-[ACP] + H(+) = 5-methyl-3-oxohexanoyl-[ACP] + CO2 + CoA. It catalyses the reaction 2-methylpropanoyl-CoA + malonyl-[ACP] + H(+) = 4-methyl-3-oxopentanoyl-[ACP] + CO2 + CoA. The enzyme catalyses (2S)-2-methylbutanoyl-CoA + malonyl-[ACP] + H(+) = (4S)-4-methyl-3-oxohexanoyl-[ACP] + CO2 + CoA. It carries out the reaction malonyl-[ACP] + acetyl-CoA + H(+) = 3-oxobutanoyl-[ACP] + CO2 + CoA. The catalysed reaction is malonyl-[ACP] + propanoyl-CoA + H(+) = 3-oxopentanoyl-[ACP] + CO2 + CoA. It catalyses the reaction butanoyl-CoA + malonyl-[ACP] + H(+) = 3-oxohexanoyl-[ACP] + CO2 + CoA. The enzyme catalyses pentanoyl-CoA + malonyl-[ACP] + H(+) = 3-oxoheptanoyl-[ACP] + CO2 + CoA. It carries out the reaction hexanoyl-CoA + malonyl-[ACP] + H(+) = 3-oxooctanoyl-[ACP] + CO2 + CoA. The catalysed reaction is heptanoyl-CoA + malonyl-[ACP] + H(+) = 3-oxononanoyl-[ACP] + CO2 + CoA. The protein operates within lipid metabolism; fatty acid biosynthesis. In terms of biological role, catalyzes the condensation reaction of fatty acid synthesis by the addition to an acyl acceptor of two carbons from malonyl-ACP. Catalyzes the first condensation reaction which initiates fatty acid synthesis and may therefore play a role in governing the total rate of fatty acid production. Possesses both acetoacetyl-ACP synthase and acetyl transacylase activities. Has some substrate specificity for branched chain acyl-CoA, determining the biosynthesis of branched-chain of fatty acids instead of straight-chain. This Bacillus subtilis (strain 168) protein is Beta-ketoacyl-[acyl-carrier-protein] synthase III 2.